A 141-amino-acid polypeptide reads, in one-letter code: Putative pre-16S rRNA nuclease (141 aa).

This sequence belongs to the YqgF nuclease family.

The protein localises to the cytoplasm. In terms of biological role, could be a nuclease involved in processing of the 5'-end of pre-16S rRNA. The sequence is that of Putative pre-16S rRNA nuclease from Aliivibrio salmonicida (strain LFI1238) (Vibrio salmonicida (strain LFI1238)).